The sequence spans 686 residues: MSKIRVHEYAKKHNISSKDLMTKLKEMNIEVSNHMTMLDDEVVNKLDNEYQAEKPSVADEFEVEEKVVRSKKNSNKKKKKGKGNEDKRQENFAGRQQTQTVETPDKITFSGSLTVGDLAKKLSKEPSEIIKKLFMLGIMATINQDLDKDTIELIANDYGIEVEEEVIVSETEFETFIDEQDDEENLKERPAVVTIMGHVDHGKTTLLDSIRNSKVTAGEAGGITQHIGAYQVEVNDKKITFLDTPGHAAFTTMRARGAQVTDITILVVAADDGVMPQTVEAINHAKAAGVPIIVAVNKMDKPAANPDRVMQELTEYELVPEAWGGDTIFVPISAIQGEGIDNLLEMILLVSEVEEYKANPNRYATGTVIEAQLDKGKGTIATLLVQNGTLRVGDPIVVGTSFGRVRAMVSDIGRRVKVAGPSTPVEITGLNEVPQAGDRFMAFADEKKARQIGESRAQEALLAQRGEKSKLSLEDLFQQIQEGDVKEINLIVKADVQGSVEAMAASLRKIDVEGVKVKIIHTGVGAITESDIILASASNAIVIGFNVRPDVNAKRTAELENVDIRLHRIIYKVIEEIEAAMQGMLDPEFEEKVIGQAEVRQTFKVTKVGTIAGCYVTDGKITRDSGVRIIRDGVVIFEGQLDTLKRFKDDVKEVAQNYECGITIERYNDLKEGDIIEAYIMEEVKR.

The tract at residues 54-105 is disordered; that stretch reads KPSVADEFEVEEKVVRSKKNSNKKKKKGKGNEDKRQENFAGRQQTQTVETPD. Over residues 69 to 81 the composition is skewed to basic residues; it reads RSKKNSNKKKKKG. The region spanning 188 to 357 is the tr-type G domain; sequence ERPAVVTIMG…LLVSEVEEYK (170 aa). A G1 region spans residues 197-204; that stretch reads GHVDHGKT. 197-204 is a GTP binding site; it reads GHVDHGKT. The segment at 222-226 is G2; that stretch reads GITQH. Residues 243–246 are G3; that stretch reads DTPG. GTP-binding positions include 243–247 and 297–300; these read DTPGH and NKMD. The interval 297–300 is G4; it reads NKMD. The interval 333–335 is G5; sequence SAI.

Belongs to the TRAFAC class translation factor GTPase superfamily. Classic translation factor GTPase family. IF-2 subfamily.

It localises to the cytoplasm. Functionally, one of the essential components for the initiation of protein synthesis. Protects formylmethionyl-tRNA from spontaneous hydrolysis and promotes its binding to the 30S ribosomal subunits. Also involved in the hydrolysis of GTP during the formation of the 70S ribosomal complex. The sequence is that of Translation initiation factor IF-2 from Bacillus cereus (strain 03BB102).